The sequence spans 426 residues: MCDVVLGAQWGDEGKGKLVDLLCDDIEVCARCAGGNNAGHTIVVGKTKYDFHMLPSGLVNPKCQNILGSGVVVHIPSFFEELENLEKKGLDCRNRLFVSSRAHLVFDFHQRTDKLKEAELSENKKSIGTTGKGIGPTYSTKASRSGIRVHHLVSDDPDAWDEFKTRYYRLVDSRYKRYGEFEYDAEAELERYKKYREVLKPFVVDSVNFMHKAIKDKKRILVEGANALMLDIDFGTYPYVTSSSTGIGGVLTGLGLPPTAIRNVYGVVKAYTTRVGEGPFPTEQLNEVGEKLQDIGAEFGVTTGRKRRCGWLDLVVMKYSTAINGYTSLNITKLDVLDTFKEIKVGVSYTYKGKKLESFPEDLNVLKNVEVDYVTLPGWEQDITGIKKYSDLPENAQKYLKFIEDFLEVPIEWVGTGPARESMLTK.

GTP contacts are provided by residues 11 to 17 (GDEGKGK) and 39 to 41 (GHT). The active-site Proton acceptor is aspartate 12. Mg(2+) is bound by residues aspartate 12 and glycine 39. IMP contacts are provided by residues 12 to 15 (DEGK), 37 to 40 (NAGH), threonine 130, arginine 144, asparagine 226, threonine 241, and arginine 305. Histidine 40 serves as the catalytic Proton donor. 301–307 (VTTGRKR) is a binding site for substrate. Residues arginine 307, 333–335 (KLD), and 415–417 (GTG) contribute to the GTP site.

Belongs to the adenylosuccinate synthetase family. In terms of assembly, homodimer. Mg(2+) is required as a cofactor.

The protein localises to the cytoplasm. The enzyme catalyses IMP + L-aspartate + GTP = N(6)-(1,2-dicarboxyethyl)-AMP + GDP + phosphate + 2 H(+). It functions in the pathway purine metabolism; AMP biosynthesis via de novo pathway; AMP from IMP: step 1/2. Functionally, plays an important role in the de novo pathway and in the salvage pathway of purine nucleotide biosynthesis. Catalyzes the first committed step in the biosynthesis of AMP from IMP. The polypeptide is Adenylosuccinate synthetase (Meyerozyma guilliermondii (strain ATCC 6260 / CBS 566 / DSM 6381 / JCM 1539 / NBRC 10279 / NRRL Y-324) (Yeast)).